The following is a 261-amino-acid chain: MTDSAAPRLHVQALSADWAEAARHWAERLGLPLAADDQADFAVQVGEQGLQVLQLGPDSPGPVRVDFVEGASAHRRKFGGGSGQMIAKAVGIQPGVRPRVLDATAGLGRDGFVLASLGCEVTLVERQPLIAALLEDGLERARRDPDVAPIAARMRLLGGNAADLMRAWEGEAPQVVYLDPMFPHRDKSALVKKEMRLFRPLVGDDLDAPALLEAALALASHRVVVKRPRKAPVIDGAKPGYSLDGKSSRYDIYPKKALNKA.

S-adenosyl-L-methionine-binding positions include 109-110, 125-126, and Asp-179; these read RD and ER.

The protein belongs to the methyltransferase superfamily. RsmJ family.

The protein resides in the cytoplasm. It carries out the reaction guanosine(1516) in 16S rRNA + S-adenosyl-L-methionine = N(2)-methylguanosine(1516) in 16S rRNA + S-adenosyl-L-homocysteine + H(+). In terms of biological role, specifically methylates the guanosine in position 1516 of 16S rRNA. The polypeptide is Ribosomal RNA small subunit methyltransferase J (Pseudomonas paraeruginosa (strain DSM 24068 / PA7) (Pseudomonas aeruginosa (strain PA7))).